We begin with the raw amino-acid sequence, 318 residues long: Porphobilinogen deaminase (318 aa).

An S-(dipyrrolylmethanemethyl)cysteine modification is found at cysteine 241.

The protein belongs to the HMBS family. In terms of assembly, monomer. Requires dipyrromethane as cofactor.

The catalysed reaction is 4 porphobilinogen + H2O = hydroxymethylbilane + 4 NH4(+). It participates in porphyrin-containing compound metabolism; protoporphyrin-IX biosynthesis; coproporphyrinogen-III from 5-aminolevulinate: step 2/4. Tetrapolymerization of the monopyrrole PBG into the hydroxymethylbilane pre-uroporphyrinogen in several discrete steps. In Geobacter sulfurreducens (strain ATCC 51573 / DSM 12127 / PCA), this protein is Porphobilinogen deaminase.